A 295-amino-acid chain; its full sequence is Acetylglutamate kinase (295 aa).

Substrate is bound by residues 70–71 (GG), R92, and N191.

The protein belongs to the acetylglutamate kinase family. ArgB subfamily.

The protein resides in the cytoplasm. The enzyme catalyses N-acetyl-L-glutamate + ATP = N-acetyl-L-glutamyl 5-phosphate + ADP. The protein operates within amino-acid biosynthesis; L-arginine biosynthesis; N(2)-acetyl-L-ornithine from L-glutamate: step 2/4. Catalyzes the ATP-dependent phosphorylation of N-acetyl-L-glutamate. The polypeptide is Acetylglutamate kinase (Mycobacterium avium (strain 104)).